We begin with the raw amino-acid sequence, 571 residues long: Septation ring formation regulator EzrA (571 aa).

At 1 to 3 (MYY) the chain is on the extracellular side. A helical transmembrane segment spans residues 4-22 (MLIGFIIVVIAVIGAGYIL). At 23–571 (KRKHYQRINE…ESKVSVDDIE (549 aa)) the chain is on the cytoplasmic side. 4 coiled-coil regions span residues 248–298 (LAQM…DTLE), 326–374 (DALA…ASGE), 400–437 (KFAEELRSLRKDELEARDDAERMRRAIITLDRKMERER), and 478–529 (RIAE…ENHF).

The protein belongs to the EzrA family.

Its subcellular location is the cell membrane. In terms of biological role, negative regulator of FtsZ ring formation; modulates the frequency and position of FtsZ ring formation. Inhibits FtsZ ring formation at polar sites. Interacts either with FtsZ or with one of its binding partners to promote depolymerization. This Listeria monocytogenes serovar 1/2a (strain ATCC BAA-679 / EGD-e) protein is Septation ring formation regulator EzrA.